We begin with the raw amino-acid sequence, 603 residues long: Elongation factor 4 (603 aa).

Positions 7 to 189 constitute a tr-type G domain; sequence KKIRNFCIIA…SVVKNVPPPE (183 aa). GTP contacts are provided by residues 19–24 and 136–139; these read DHGKST and NKID.

The protein belongs to the TRAFAC class translation factor GTPase superfamily. Classic translation factor GTPase family. LepA subfamily.

The protein localises to the cell membrane. It catalyses the reaction GTP + H2O = GDP + phosphate + H(+). Functionally, required for accurate and efficient protein synthesis under certain stress conditions. May act as a fidelity factor of the translation reaction, by catalyzing a one-codon backward translocation of tRNAs on improperly translocated ribosomes. Back-translocation proceeds from a post-translocation (POST) complex to a pre-translocation (PRE) complex, thus giving elongation factor G a second chance to translocate the tRNAs correctly. Binds to ribosomes in a GTP-dependent manner. In Acetivibrio thermocellus (strain ATCC 27405 / DSM 1237 / JCM 9322 / NBRC 103400 / NCIMB 10682 / NRRL B-4536 / VPI 7372) (Clostridium thermocellum), this protein is Elongation factor 4.